Reading from the N-terminus, the 238-residue chain is uncharacterized protein (238 aa).

Helical transmembrane passes span 16-36 (HLIIFSKMLLAMVLGSVIGLE), 44-64 (VGVKTCAIIAVTTCVLTIVSI), 81-101 (PMRLAAQVISGIGFLGAGVIL), and 123-143 (IGIAAGAGFVFDAVIATVMIL).

Belongs to the MgtC/SapB family.

It is found in the cell inner membrane. This is an uncharacterized protein from Haemophilus influenzae (strain ATCC 51907 / DSM 11121 / KW20 / Rd).